A 286-amino-acid polypeptide reads, in one-letter code: Polyamine aminopropyltransferase (286 aa).

A PABS domain is found at 6–239 (PVWIDEVFED…GWWSWLYASD (234 aa)). Q34 lines the S-methyl-5'-thioadenosine pocket. Spermidine contacts are provided by H65 and D89. S-methyl-5'-thioadenosine contacts are provided by residues E109 and 140-141 (DG). Residue D159 is the Proton acceptor of the active site. 159 to 162 (DGSD) serves as a coordination point for spermidine. An S-methyl-5'-thioadenosine-binding site is contributed by P166.

Belongs to the spermidine/spermine synthase family. As to quaternary structure, homodimer or homotetramer. Homodimer.

It localises to the cytoplasm. The catalysed reaction is S-adenosyl 3-(methylsulfanyl)propylamine + putrescine = S-methyl-5'-thioadenosine + spermidine + H(+). It functions in the pathway amine and polyamine biosynthesis; spermidine biosynthesis; spermidine from putrescine: step 1/1. Catalyzes the irreversible transfer of a propylamine group from the amino donor S-adenosylmethioninamine (decarboxy-AdoMet) to putrescine (1,4-diaminobutane) to yield spermidine. In Synechococcus elongatus (strain ATCC 33912 / PCC 7942 / FACHB-805) (Anacystis nidulans R2), this protein is Polyamine aminopropyltransferase.